A 395-amino-acid chain; its full sequence is Protein BUR2 (395 aa).

2 disordered regions span residues 1–31 (MSAT…ASSG) and 372–395 (AKQE…KPKI). At S24 the chain carries Phosphoserine.

In terms of assembly, belongs to the BUR kinase complex composed of SGV1/BUR1 and BUR2. Interacts with SGV1.

It localises to the nucleus. Its function is as follows. Component of the BUR kinase complex involved in transcription regulation. This complex phosphorylates 'Ser-120' of the UBC2/RAD6 ubiquitin-conjugating enzyme (E2), leading to monoubiquitination of histone H2B, the localization of the PAF1 complex to the chromatin, and the silencing of telomeric-associated genes. Also required for histone H3 'Lys-4' trimethylation. May phosphorylate the 'Ser-5' of the RBP1 carboxy-terminal domain (CTD) repeats. Necessary for the recovery from pheromone-induced growth arrest in the cell cycle G1 phase. Also required for vegetative growth itself. The kinase activity of the complex requires the presence of BUR2. Overexpression of BUR2 interferes with mitotic chromosome segregation. This chain is Protein BUR2 (BUR2), found in Saccharomyces cerevisiae (strain ATCC 204508 / S288c) (Baker's yeast).